The sequence spans 875 residues: SPbeta prophage-derived uncharacterized protein YomG (875 aa).

The stretch at 351 to 381 (AKKAEISRINSQITNISQEIEKLKDRLSMDK) forms a coiled coil. The region spanning 537–648 (PVANPTILNN…SIDSSGRILS (112 aa)) is the Fibronectin type-III domain.

In Bacillus subtilis (strain 168), this protein is SPbeta prophage-derived uncharacterized protein YomG (yomG).